The chain runs to 857 residues: Envelope glycoprotein B (857 aa).

Positions 1–21 (MTRRRVLSVVVLLAALACRLG) are cleaved as a signal peptide. The Virion surface portion of the chain corresponds to 22 to 732 (AQTPEQPAPP…SGFISFFKNP (711 aa)). Intrachain disulfides connect Cys51/Cys528, Cys68/Cys484, Cys141/Cys206, Cys295/Cys342, and Cys551/Cys588. Asn76 carries an N-linked (GlcNAc...) asparagine; by host glycan. Residues 108–114 (IYNGWYA) form an involved in fusion and/or binding to host membrane region. Asn163 is a glycosylation site (N-linked (GlcNAc...) asparagine; by host). The tract at residues 192-200 (GWLIWTYRT) is involved in fusion and/or binding to host membrane. 4 N-linked (GlcNAc...) asparagine; by host glycosylation sites follow: Asn290, Asn329, Asn348, and Asn395. Positions 398–452 (ELTTPTSSPPSSPSPPAPPAARGSTSAAVLRRRRRDAGNATTPVPPAAPGKSLGT) are disordered. Residues 404–416 (SSPPSSPSPPAPP) are compositionally biased toward pro residues. N-linked (GlcNAc...) asparagine; by host glycans are attached at residues Asn436, Asn563, and Asn629. Hydrophobic membrane proximal region stretches follow at residues 678–730 (LDNA…SFFK) and 709–729 (NLVS…ISFF). A helical transmembrane segment spans residues 733–753 (FGGMLILVLVAGVVILVISLT). Residues 754–857 (RRTRQMSQQP…ALLGEAETEF (104 aa)) lie on the Intravirion side of the membrane. Residues 832-857 (FPGLRRRRYHDPETAAALLGEAETEF) form a disordered region. The segment covering 845–857 (TAAALLGEAETEF) has biased composition (low complexity).

The protein belongs to the herpesviridae glycoprotein B family. As to quaternary structure, homotrimer; disulfide-linked. Binds to heparan sulfate proteoglycans. Interacts with gH/gL heterodimer. A proteolytic cleavage by host furin generates two subunits that remain linked by disulfide bonds.

Its subcellular location is the virion membrane. The protein resides in the host cell membrane. The protein localises to the host endosome membrane. It is found in the host Golgi apparatus membrane. Functionally, envelope glycoprotein that forms spikes at the surface of virion envelope. Essential for the initial attachment to heparan sulfate moieties of the host cell surface proteoglycans. Involved in fusion of viral and cellular membranes leading to virus entry into the host cell. Following initial binding to its host receptors, membrane fusion is mediated by the fusion machinery composed at least of gB and the heterodimer gH/gL. May be involved in the fusion between the virion envelope and the outer nuclear membrane during virion egress. The chain is Envelope glycoprotein B from Epstein-Barr virus (strain GD1) (HHV-4).